The primary structure comprises 157 residues: Probable succinate transporter subunit YjjB (157 aa).

Transmembrane regions (helical) follow at residues L8–F28, A55–I75, V87–I107, and F129–W149.

Belongs to the ThrE exporter (TC 2.A.79) family. The transporter is composed of YjjB and YjjP.

It is found in the cell inner membrane. Involved in succinate export with YjjP. Both proteins are required for export. The polypeptide is Probable succinate transporter subunit YjjB (Salmonella agona (strain SL483)).